The sequence spans 215 residues: Virulence protein YscR (215 aa).

The next 4 membrane-spanning stretches (helical) occupy residues 10-30 (LIGILFLLSILPLIIVMGTSF), 53-73 (IALYGLALVLSLFIMGPTLLA), 156-176 (IGLLIYLPFLAIDLLISNILL), and 188-208 (ISLPFKLLIFLLAGGWDLTLA).

This sequence belongs to the FliP/MopC/SpaP family.

It localises to the cell membrane. This is Virulence protein YscR (yscR) from Salmonella typhimurium (strain LT2 / SGSC1412 / ATCC 700720).